The following is a 395-amino-acid chain: Ketoisovalerate oxidoreductase subunit VorA (395 aa).

As to quaternary structure, heterotetramer of one alpha, one beta, one delta and one gamma chain.

The catalysed reaction is 3-methyl-2-oxobutanoate + 2 oxidized [2Fe-2S]-[ferredoxin] + CoA = 2-methylpropanoyl-CoA + 2 reduced [2Fe-2S]-[ferredoxin] + CO2 + H(+). The polypeptide is Ketoisovalerate oxidoreductase subunit VorA (vorA) (Pyrococcus abyssi (strain GE5 / Orsay)).